The chain runs to 1409 residues: Protein three rows (1409 aa).

Residues 1052 to 1058 are separase cleavage-site; it reads VEPIRKQ. Disordered regions lie at residues 1260–1284 and 1297–1409; these read PIGC…SDHV and DDAA…RQRN. Composition is skewed to low complexity over residues 1264 to 1273 and 1300 to 1310; these read SNSSSSSSKS and ASVSASTPAPS.

As to quaternary structure, interacts with pim and Sse. Cleavage of thr contributes to inactivation of Sse.

The protein localises to the cytoplasm. In terms of biological role, required specifically for chromosome disjunction during all mitoses; maternally provided protein is sufficient until mitosis 14 then zygotic protein is required. Involved in formation and/or maintenance of epithelial structures: bud extension during Malpighian tubule development, and foregut and hindgut morphogenesis. The protein is Protein three rows (thr) of Drosophila pseudoobscura pseudoobscura (Fruit fly).